Here is a 430-residue protein sequence, read N- to C-terminus: Long-chain specific acyl-CoA dehydrogenase, mitochondrial (430 aa).

The transit peptide at 1–30 (MATRLLRGSLRLWGGLCAPRLPTASRCSHS) directs the protein to the mitochondrion. Position 42 is an N6-acetyllysine (Lys-42). Phosphoserine occurs at positions 54 and 55. N6-acetyllysine; alternate is present on residues Lys-66 and Lys-81. N6-succinyllysine; alternate is present on residues Lys-66 and Lys-81. An N6-acetyllysine mark is found at Lys-92 and Lys-95. At Lys-165 the chain carries N6-succinyllysine. FAD-binding positions include 170 to 179 (IAMTEPGAGS) and 203 to 205 (FIT). Residue Ser-179 participates in substrate binding. Position 227–228 (227–228 (AH)) interacts with substrate. Lys-240 carries the post-translational modification N6-succinyllysine. Residues Lys-254 and Lys-279 each carry the N6-acetyllysine; alternate modification. An N6-succinyllysine; alternate mark is found at Lys-254 and Lys-279. Residues Tyr-282 and 289–292 (PQER) each bind substrate. Glu-291 serves as the catalytic Proton acceptor. Residue Arg-317 participates in FAD binding. Lys-318 bears the N6-acetyllysine mark. Lys-322 bears the N6-acetyllysine; alternate mark. Residue Lys-322 is modified to N6-succinyllysine; alternate. Residue Gln-328 participates in FAD binding. Position 358 is an N6-acetyllysine (Lys-358). Ser-362 is modified (phosphoserine). Residue 385-389 (QLHGG) coordinates FAD. 412-413 (GG) is a substrate binding site. Residue 414 to 416 (TNE) participates in FAD binding.

It belongs to the acyl-CoA dehydrogenase family. As to quaternary structure, homotetramer. FAD serves as cofactor. Post-translationally, acetylation at Lys-318 and Lys-322 in proximity of the cofactor-binding sites strongly reduces catalytic activity. These sites are deacetylated by SIRT3.

The protein localises to the mitochondrion matrix. It carries out the reaction a long-chain 2,3-saturated fatty acyl-CoA + oxidized [electron-transfer flavoprotein] + H(+) = a long-chain (2E)-enoyl-CoA + reduced [electron-transfer flavoprotein]. It catalyses the reaction hexanoyl-CoA + oxidized [electron-transfer flavoprotein] + H(+) = (2E)-hexenoyl-CoA + reduced [electron-transfer flavoprotein]. The enzyme catalyses octanoyl-CoA + oxidized [electron-transfer flavoprotein] + H(+) = (2E)-octenoyl-CoA + reduced [electron-transfer flavoprotein]. The catalysed reaction is decanoyl-CoA + oxidized [electron-transfer flavoprotein] + H(+) = (2E)-decenoyl-CoA + reduced [electron-transfer flavoprotein]. It carries out the reaction dodecanoyl-CoA + oxidized [electron-transfer flavoprotein] + H(+) = (2E)-dodecenoyl-CoA + reduced [electron-transfer flavoprotein]. It catalyses the reaction tetradecanoyl-CoA + oxidized [electron-transfer flavoprotein] + H(+) = (2E)-tetradecenoyl-CoA + reduced [electron-transfer flavoprotein]. The enzyme catalyses oxidized [electron-transfer flavoprotein] + hexadecanoyl-CoA + H(+) = (2E)-hexadecenoyl-CoA + reduced [electron-transfer flavoprotein]. The catalysed reaction is octadecanoyl-CoA + oxidized [electron-transfer flavoprotein] + H(+) = (2E)-octadecenoyl-CoA + reduced [electron-transfer flavoprotein]. It carries out the reaction eicosanoyl-CoA + oxidized [electron-transfer flavoprotein] + H(+) = (2E)-eicosenoyl-CoA + reduced [electron-transfer flavoprotein]. It catalyses the reaction docosanoyl-CoA + oxidized [electron-transfer flavoprotein] + H(+) = (2E)-docosenoyl-CoA + reduced [electron-transfer flavoprotein]. The enzyme catalyses tetracosanoyl-CoA + oxidized [electron-transfer flavoprotein] + H(+) = (2E)-tetracosenoyl-CoA + reduced [electron-transfer flavoprotein]. The catalysed reaction is (5E)-tetradecenoyl-CoA + oxidized [electron-transfer flavoprotein] + H(+) = (2E,5E)-tetradecadienoyl-CoA + reduced [electron-transfer flavoprotein]. It carries out the reaction (5Z)-tetradecenoyl-CoA + oxidized [electron-transfer flavoprotein] + H(+) = (2E,5Z)-tetradecadienoyl-CoA + reduced [electron-transfer flavoprotein]. It catalyses the reaction oxidized [electron-transfer flavoprotein] + (9Z)-octadecenoyl-CoA + H(+) = (2E,9Z)-octadecadienoyl-CoA + reduced [electron-transfer flavoprotein]. Its pathway is lipid metabolism; mitochondrial fatty acid beta-oxidation. In terms of biological role, long-chain specific acyl-CoA dehydrogenase is one of the acyl-CoA dehydrogenases that catalyze the first step of mitochondrial fatty acid beta-oxidation, an aerobic process breaking down fatty acids into acetyl-CoA and allowing the production of energy from fats. The first step of fatty acid beta-oxidation consists in the removal of one hydrogen from C-2 and C-3 of the straight-chain fatty acyl-CoA thioester, resulting in the formation of trans-2-enoyl-CoA. Among the different mitochondrial acyl-CoA dehydrogenases, long-chain specific acyl-CoA dehydrogenase can act on saturated and unsaturated acyl-CoAs with 6 to 24 carbons with a preference for 8 to 18 carbons long primary chains. The sequence is that of Long-chain specific acyl-CoA dehydrogenase, mitochondrial from Sus scrofa (Pig).